Here is a 415-residue protein sequence, read N- to C-terminus: Zona pellucida-like domain-containing protein 1 (415 aa).

The N-terminal stretch at 1–19 (MEPIWLLLLLAIFTVSVSA) is a signal peptide. The Extracellular segment spans residues 20-372 (QFNGYNCDAN…QQFQINSVTS (353 aa)). Residues 43–320 (YCGVQTITMK…PTCHNRDRRD (278 aa)) form the ZP domain. Disulfide bonds link C44–C155, C79–C104, C235–C296, and C255–C313. The chain crosses the membrane as a helical span at residues 373 to 393 (ALISGVVILGATSLSFFIIAL). The Cytoplasmic segment spans residues 394–415 (TLLNRKKQNSLVLCGIRNPVFN).

In terms of processing, proteolytically cleaved before the transmembrane segment to yield the secreted form found in the extracellular matrix of the cupula.

The protein localises to the cytoplasmic vesicle membrane. It is found in the secreted. Its subcellular location is the extracellular space. The protein resides in the extracellular matrix. Its function is as follows. Glycoprotein which is a component of the gelatinous extracellular matrix in the cupulae of the vestibular organ. This Xenopus laevis (African clawed frog) protein is Zona pellucida-like domain-containing protein 1 (zpld1).